A 965-amino-acid polypeptide reads, in one-letter code: Receptor-like protein 15 (965 aa).

An N-terminal signal peptide occupies residues 1–23 (MEGKVFLGHNLIWVMLLMGQLHG). The Extracellular segment spans residues 24 to 916 (YKSCIDEEKI…GVEADESIID (893 aa)). N-linked (GlcNAc...) asparagine glycans are attached at residues N57, N95, N109, and N145. LRR repeat units follow at residues 80-102 (EISFGGLSLKDNSLLNLSLLHPF), 103-127 (EDVRSLNLSSSRCSGLFDDVEGYKS), 131-154 (LRKLEILDLASNKFNNSIFHFLSA), 156-179 (TSLTTLFLRSNNMDGSFPAKELRD), 180-204 (LTNLELLDLSRNRFNGSIPIQELSS), 206-230 (RKLKALDLSGNEFSGSMELQGKFCT), 243-267 (LNNMQELDLSQNKLVGHLPSCLTSL), 268-290 (TGLRVLDLSSNKLTGTVPSSLGS), 292-315 (QSLEYLSLFDNDFEGSFSFGSLAN), 316-341 (LSNLMVLKLCSKSSSLQVLSESSWKP), 342-365 (KFQLSVIALRSCNMEKVPHFLLHQ), 366-389 (KDLRHVDLSDNNISGKLPSWLLAN), 391-415 (TKLKVLLLQNNLFTSFQIPKSAHNL), 417-435 (FLDVSANDFNHLFPENIGW), 437-461 (FPHLRYLNTSKNNFQENLPSSLGNM), 462-485 (NGIQYMDLSRNSFHGNLPRSFVNG), and 487-512 (YSMAILKLSHNKLSGEIFPESTNFTN). Residue N194 is glycosylated (N-linked (GlcNAc...) asparagine). An N-linked (GlcNAc...) asparagine glycan is attached at N315. N-linked (GlcNAc...) asparagine glycosylation is found at N377 and N389. N444 carries N-linked (GlcNAc...) asparagine glycosylation. The N-linked (GlcNAc...) asparagine glycan is linked to N509. The stretch at 514-533 (LGLFMDNNLFTGKIGQGLRS) is one LRR 18; degenerate repeat. 11 LRR repeats span residues 534–557 (LINLELLDMSNNNLTGVIPSWIGE), 558–582 (LPSLTALLISDNFLKGDIPMSLFNK), 584–606 (SLQLLDLSANSLSGVIPPQHDSR), 608–627 (GVVLLLQDNKLSGTIPDTLL), 628–652 (ANVEILDLRNNRFSGKIPEFINIQN), 654–674 (SILLLRGNNFTGQIPHQLCGL), 675–698 (SNIQLLDLSNNRLNGTIPSCLSNT), 778–801 (LKLLFGMDLSENELSGEIPVEFGG), 802–825 (LLELRALNLSHNNLSGVIPKSISS), 827–850 (EKMESFDLSFNRLQGRIPSQLTEL), and 851–875 (TSLSVFKVSHNNLSGVIPQGRQFNT). N-linked (GlcNAc...) asparagine glycans are attached at residues N546 and N581. Residues N652, N662, N688, and N697 are each glycosylated (N-linked (GlcNAc...) asparagine). N809 and N814 each carry an N-linked (GlcNAc...) asparagine glycan. 3 N-linked (GlcNAc...) asparagine glycosylation sites follow: N862, N893, and N898. The chain crosses the membrane as a helical span at residues 917 to 937 (MVSFYLSFAAAYVTILIGILA). Residues 938–965 (SLSFDSPWSRFWFYKVDAFIKKVRNLLL) lie on the Cytoplasmic side of the membrane.

The protein belongs to the RLP family.

The protein localises to the cell membrane. This chain is Receptor-like protein 15, found in Arabidopsis thaliana (Mouse-ear cress).